The primary structure comprises 256 residues: Ribonuclease HII (256 aa).

An RNase H type-2 domain is found at 73 to 256; sequence KLIAGIDEAG…RVSFTKNFIV (184 aa). A divalent metal cation contacts are provided by aspartate 79, glutamate 80, and aspartate 171.

The protein belongs to the RNase HII family. It depends on Mn(2+) as a cofactor. Requires Mg(2+) as cofactor.

Its subcellular location is the cytoplasm. It catalyses the reaction Endonucleolytic cleavage to 5'-phosphomonoester.. In terms of biological role, endonuclease that specifically degrades the RNA of RNA-DNA hybrids. The polypeptide is Ribonuclease HII (Acetivibrio thermocellus (strain ATCC 27405 / DSM 1237 / JCM 9322 / NBRC 103400 / NCIMB 10682 / NRRL B-4536 / VPI 7372) (Clostridium thermocellum)).